The chain runs to 67 residues: Large ribosomal subunit protein bL35 (67 aa).

Residues 1–16 (MPKMKTKSGAKKRFRV) are compositionally biased toward basic residues. A disordered region spans residues 1–24 (MPKMKTKSGAKKRFRVRPGGTVKR).

Belongs to the bacterial ribosomal protein bL35 family.

The polypeptide is Large ribosomal subunit protein bL35 (Polaromonas naphthalenivorans (strain CJ2)).